The sequence spans 547 residues: Flagellar hook-associated protein 1 (547 aa).

This sequence belongs to the flagella basal body rod proteins family.

The protein resides in the secreted. The protein localises to the bacterial flagellum. This chain is Flagellar hook-associated protein 1 (flgK), found in Escherichia coli (strain K12).